We begin with the raw amino-acid sequence, 514 residues long: Cytochrome P450 71AP13 (514 aa).

The helical transmembrane segment at histidine 20 to tyrosine 37 threads the bilayer. Residues asparagine 127 and asparagine 184 are each glycosylated (N-linked (GlcNAc...) asparagine). Residue cysteine 455 participates in heme binding.

This sequence belongs to the cytochrome P450 family. It depends on heme as a cofactor. In terms of tissue distribution, expressed in fruit kernel, seedlings, leaves and stems.

The protein resides in the membrane. This Prunus mume (Japanese apricot) protein is Cytochrome P450 71AP13.